The following is an 88-amino-acid chain: Small ribosomal subunit protein uS19 (88 aa).

The protein belongs to the universal ribosomal protein uS19 family.

In terms of biological role, protein S19 forms a complex with S13 that binds strongly to the 16S ribosomal RNA. The protein is Small ribosomal subunit protein uS19 of Chlamydia abortus (strain DSM 27085 / S26/3) (Chlamydophila abortus).